Here is a 212-residue protein sequence, read N- to C-terminus: Secreted and transmembrane protein 1b (212 aa).

Positions M1–A28 are cleaved as a signal peptide. Topologically, residues H29–E160 are extracellular. C38 and C55 are disulfide-bonded. 4 N-linked (GlcNAc...) asparagine glycosylation sites follow: N56, N85, N114, and N130. The chain crosses the membrane as a helical span at residues V161–W181. The Cytoplasmic segment spans residues Y182 to P212.

This sequence belongs to the SECTM family. In terms of assembly, interacts with CD7.

The protein localises to the cell membrane. It is found in the secreted. Its function is as follows. May be involved in thymocyte signaling. The sequence is that of Secreted and transmembrane protein 1b (Sectm1b) from Mus musculus (Mouse).